The following is a 503-amino-acid chain: Maturase K (503 aa).

This sequence belongs to the intron maturase 2 family. MatK subfamily.

The protein localises to the plastid. It is found in the chloroplast. In terms of biological role, usually encoded in the trnK tRNA gene intron. Probably assists in splicing its own and other chloroplast group II introns. This chain is Maturase K, found in Diospyros kaki (Kaki persimmon).